The following is a 739-amino-acid chain: MEGGGGRDEPSACRAGDVNMDDPKKEDILLLADEKFDFDLSLSSSSANEDDEVFFGPFGHKERCIAASLELNNPVPEQPPLPTSESPFAWSPLAGEKFVEVYKEAHLLALHIESSSRNQAAQAAKPEDPRSQGVERFIQESKLKINLFEKEKEMKKSPTSLKRETYYLSDSPLLGPPVGEPRLLASSPALPSSGAQARLTRAPGPPHSAHALPRESCTAHAASQAATQRKPGTKLLLPRAASVRGRSIPGAAEKPKKEIPASPSRTKIPAEKESHRDVLPDKPAPGAVNVPAAGSHLGQGKRAIPVPNKLGLKKTLLKAPGSTSNLARKSSSGPVWSGASSACTSPAVGKAKSSEFASIPANSSRPLSNISKSGRMGPAMLRPALPAGPVGASSWQAKRVDVSELAAEQLTAPPSASPTQPQTPEGGGQWLNSSCAWSESSQLNKTRSIRRRDSCLNSKTKVMPTPTNQFKIPKFSIGDSPDSSTPKLSRAQRPQSCTSVGRVTVHSTPVRRSSGPAPQSLLSAWRVSALPTPASRRCSGLPPMTPKTMPRAVGSPLCVPARRRSSEPRKNSAMRTEPTRESNRKTDSRLVDVSPDRGSPPSRVPQALNFSPEESDSTFSKSTATEVAREEAKPGGDAAPSEALLVDIKLEPLAVTPDAASQPLIDLPLIDFCDTPEAHVAVGSESRPLIDLMTNTPDMNKNVAKPSPVVGQLIDLSSPLIQLSPEADKENVDSPLLKF.

The segment covering 1 to 11 (MEGGGGRDEPS) has biased composition (basic and acidic residues). Residues 1-20 (MEGGGGRDEPSACRAGDVNM) form a disordered region. Ser-91 carries the post-translational modification Phosphoserine. Disordered stretches follow at residues 116-136 (SRNQ…GVER), 149-306 (EKEK…AIPV), and 320-639 (PGST…GDAA). Residues 149-165 (EKEKEMKKSPTSLKRET) are compositionally biased toward basic and acidic residues. Ser-157 bears the Phosphoserine mark. Thr-159 bears the Phosphothreonine mark. A phosphoserine mark is found at Ser-171, Ser-187, Ser-208, Ser-247, and Ser-262. Residues 181–195 (PRLLASSPALPSSGA) show a composition bias toward low complexity. Over residues 268–280 (IPAEKESHRDVLP) the composition is skewed to basic and acidic residues. Composition is skewed to low complexity over residues 284–294 (APGAVNVPAAG) and 330–342 (SSSG…ASSA). Position 331 is a phosphoserine (Ser-331). The segment covering 360 to 372 (PANSSRPLSNISK) has biased composition (polar residues). A compositionally biased stretch (low complexity) spans 411-424 (TAPPSASPTQPQTP). Composition is skewed to polar residues over residues 430 to 446 (WLNS…LNKT) and 455 to 470 (CLNS…TNQF). Position 480 is a phosphoserine (Ser-480). Residues 481-522 (PDSSTPKLSRAQRPQSCTSVGRVTVHSTPVRRSSGPAPQSLL) are compositionally biased toward polar residues. Thr-485 is subject to Phosphothreonine. Residues Ser-496, Ser-499, Ser-514, Ser-520, Ser-523, and Ser-528 each carry the phosphoserine modification. The residue at position 532 (Thr-532) is a Phosphothreonine. Phosphoserine occurs at positions 535 and 555. The span at 577–590 (EPTRESNRKTDSRL) shows a compositional bias: basic and acidic residues. 2 positions are modified to phosphoserine: Ser-594 and Ser-611. Residue Thr-696 is modified to Phosphothreonine. Ser-707, Ser-717, Ser-718, Ser-724, and Ser-734 each carry phosphoserine.

Phosphorylated in mitosis.

The protein resides in the cytoplasm. The protein localises to the cytoskeleton. In terms of biological role, may be involved in p53-induced cell cycle arrest in G2/M phase by interfering with microtubule rearrangements that are required to enter mitosis. Overexpression delays G2/M phase progression. In Homo sapiens (Human), this protein is G2 and S phase-expressed protein 1.